The primary structure comprises 364 residues: UDP-3-O-acylglucosamine N-acyltransferase (364 aa).

Residue His-258 is the Proton acceptor of the active site.

Belongs to the transferase hexapeptide repeat family. LpxD subfamily. As to quaternary structure, homotrimer.

It carries out the reaction a UDP-3-O-[(3R)-3-hydroxyacyl]-alpha-D-glucosamine + a (3R)-hydroxyacyl-[ACP] = a UDP-2-N,3-O-bis[(3R)-3-hydroxyacyl]-alpha-D-glucosamine + holo-[ACP] + H(+). The protein operates within bacterial outer membrane biogenesis; LPS lipid A biosynthesis. In terms of biological role, catalyzes the N-acylation of UDP-3-O-acylglucosamine using 3-hydroxyacyl-ACP as the acyl donor. Is involved in the biosynthesis of lipid A, a phosphorylated glycolipid that anchors the lipopolysaccharide to the outer membrane of the cell. The chain is UDP-3-O-acylglucosamine N-acyltransferase from Burkholderia orbicola (strain MC0-3).